The sequence spans 159 residues: Endoribonuclease YbeY (159 aa).

3 residues coordinate Zn(2+): histidine 125, histidine 129, and histidine 135.

The protein belongs to the endoribonuclease YbeY family. Zn(2+) serves as cofactor.

The protein resides in the cytoplasm. Functionally, single strand-specific metallo-endoribonuclease involved in late-stage 70S ribosome quality control and in maturation of the 3' terminus of the 16S rRNA. The polypeptide is Endoribonuclease YbeY (Limosilactobacillus reuteri (strain DSM 20016) (Lactobacillus reuteri)).